The primary structure comprises 558 residues: MVFPIRILVLFALLAFPACVHGAIRKYTFNVVTKQVTRICSTKQIVTVNGKFPGPTIYANEDDTILVNVVNNVKYNVSIHWHGIRQLRTGWADGPAYITQCPIKPGHSYVYNFTVTGQRGTLWWHAHVLWLRATVHGAIVILPKLGLPYPFPKPHREEVIILGEWWKSDTETVVNEALKSGLAPNVSDAHVINGHPGFVPNCPSQGNFKLAVESGKTYMLRLINAALNEELFFKIAGHRFTVVEVDAVYVKPFNTDTILIAPGQTTTALVSAARPSGQYLIAAAPFQDSAVVAVDNRTATATVHYSGTLSATPTKTTSPPPQNATSVANTFVNSLRSLNSKTYPANVPITVDHDLLFTVGLGINRCHSCKAGNFSRVVAAINNITFKMPKTALLQAHYFNLTGIYTTDFPAKPRRVFDFTGKPPSNLATMKATKLYKLPYNSTVQVVLQDTGNVAPENHPIHLHGFNFFVVGLGTGNYNSKKDSNKFNLVDPVERNTVGVPSGGWAAIRFRADNPGVWFMHCHLEVHTTWGLKMAFLVENGKGPNQSIRPPPSDLPKC.

An N-terminal signal peptide occupies residues 1-22 (MVFPIRILVLFALLAFPACVHG). Plastocyanin-like domains are found at residues 30-146 (NVVT…PKLG) and 157-308 (EEVI…YSGT). N-linked (GlcNAc...) asparagine glycosylation is present at asparagine 76. Residues histidine 80 and histidine 82 each coordinate Cu cation. Asparagine 112 carries N-linked (GlcNAc...) asparagine glycosylation. Residues histidine 125 and histidine 127 each contribute to the Cu cation site. N-linked (GlcNAc...) asparagine glycans are attached at residues asparagine 185, asparagine 296, asparagine 323, asparagine 373, asparagine 383, asparagine 400, and asparagine 441. One can recognise a Plastocyanin-like 3 domain in the interval 408–542 (DFPAKPRRVF…KMAFLVENGK (135 aa)). Residues histidine 459, histidine 462, histidine 464, histidine 521, cysteine 522, histidine 523, and histidine 527 each coordinate Cu cation. N-linked (GlcNAc...) asparagine glycosylation is present at asparagine 545.

This sequence belongs to the multicopper oxidase family. Requires Cu cation as cofactor. Ubiquitous, with lower levels in siliques.

The protein localises to the secreted. It localises to the extracellular space. It is found in the apoplast. The catalysed reaction is 4 hydroquinone + O2 = 4 benzosemiquinone + 2 H2O. Its function is as follows. Lignin degradation and detoxification of lignin-derived products. This Arabidopsis thaliana (Mouse-ear cress) protein is Laccase-10 (LAC10).